A 212-amino-acid chain; its full sequence is Transcription factor MYB8 (212 aa).

2 consecutive HTH myb-type domains span residues 9–61 and 62–116; these read KAHM…INYL and RPDL…KRKL. 2 consecutive DNA-binding regions (H-T-H motif) follow at residues 37-61 and 89-112; these read WRSLPKSVGLLRCGKSCRLRWINYL and WSLIAGKLPGRTDNEIKNYWNTHI.

It localises to the nucleus. In terms of biological role, transcription activator. This chain is Transcription factor MYB8, found in Arabidopsis thaliana (Mouse-ear cress).